Here is a 458-residue protein sequence, read N- to C-terminus: Sulfite efflux pump SSU1 (458 aa).

The Cytoplasmic portion of the chain corresponds to 1–11 (MVANWVLALTR). A helical transmembrane segment spans residues 12-32 (QFDPFMFMMVMGVGISSNILY). The Extracellular segment spans residues 33–48 (SFPYPARWLRICSYIM). A helical transmembrane segment spans residues 49 to 69 (FAIACLIFIAVQALQILHLIV). At 70–89 (YIKEKSFREYFNDFFRNMKH) the chain is on the cytoplasmic side. Residues 90–110 (NLFWGTYPMGLVTIINFLGAL) traverse the membrane as a helical segment. Topologically, residues 111-135 (SKANTTKSPTNARNLMIFVYVLWWY) are extracellular. Residues 136-156 (DLAVCLVIAWGISFLIWHDYY) form a helical membrane-spanning segment. The Cytoplasmic segment spans residues 157 to 176 (PLEGIGNYPSYNIKMASENM). Residues 177–197 (KSVLLLDIIPLVVVASSCGTF) form a helical membrane-spanning segment. At 198-220 (TMSEIFFHAFNRNIQLITLVICA) the chain is on the extracellular side. Residues 221 to 241 (LTWLHAIIFVFILIAIYFWSL) traverse the membrane as a helical segment. Residues 242 to 252 (YINKIPPMTQV) lie on the Cytoplasmic side of the membrane. The chain crosses the membrane as a helical span at residues 253–275 (FTLFLLLGPMGQGSFGVLLLTDN). The Extracellular segment spans residues 276–309 (IKKYAGKYYPTDNITREQEILTIAVPWCFKILGM). A helical membrane pass occupies residues 310–330 (VSAMALLAMGYFFTVISVVSI). Topologically, residues 331 to 350 (LSYYNKKEIENETGKVKRVY) are cytoplasmic. The helical transmembrane segment at 351–371 (TFHKGFWGMTFPMGTMSLGNE) threads the bilayer. Residues 372–387 (ELYVQYNQYVPLYAFR) lie on the Extracellular side of the membrane. Residues 388-408 (VLGTIYGGVCVCWSILCLLCT) form a helical membrane-spanning segment. Residues 409 to 458 (LHEYSKKMLHAARKSSLFSESGTEKTTVSPYNSIESVEESNSALDFTRLA) are Cytoplasmic-facing. 3 positions are modified to phosphoserine: Ser-444, Ser-448, and Ser-450.

Belongs to the tellurite-resistance/dicarboxylate transporter (TDT) family.

The protein resides in the cell membrane. Its function is as follows. Involved in efflux of free sulfite. Mutations in the SSU1 gene cause sensitivity to sulfite. The protein is Sulfite efflux pump SSU1 (SSU1) of Saccharomyces cerevisiae (strain ATCC 204508 / S288c) (Baker's yeast).